A 165-amino-acid chain; its full sequence is 3-isopropylmalate dehydratase small subunit 2 (165 aa).

Belongs to the LeuD family. LeuD type 2 subfamily. Heterodimer of LeuC and LeuD.

It carries out the reaction (2R,3S)-3-isopropylmalate = (2S)-2-isopropylmalate. Its pathway is amino-acid biosynthesis; L-leucine biosynthesis; L-leucine from 3-methyl-2-oxobutanoate: step 2/4. Its function is as follows. Catalyzes the isomerization between 2-isopropylmalate and 3-isopropylmalate, via the formation of 2-isopropylmaleate. The polypeptide is 3-isopropylmalate dehydratase small subunit 2 (leuD2) (Archaeoglobus fulgidus (strain ATCC 49558 / DSM 4304 / JCM 9628 / NBRC 100126 / VC-16)).